A 668-amino-acid chain; its full sequence is Probable metal-nicotianamine transporter YSL5 (668 aa).

Residues 1-11 (MPPPETSSAAA) are compositionally biased toward low complexity. A disordered region spans residues 1 to 22 (MPPPETSSAAAPSPPSPDPLPP). Positions 12-22 (PSPPSPDPLPP) are enriched in pro residues. 14 helical membrane-spanning segments follow: residues 27 to 47 (LTLRGVAVAAVLGSLLCVVIH), 51 to 71 (LTVGVIPALNVASGLLAFFLA), 102 to 122 (CAIACGSLAFSGCSSSYIFAM), 147 to 167 (LGWMIGFMFLIALIGPFSIVM), 209 to 229 (LVKYMSLSFGWSFFKWFFSGV), 268 to 288 (IVNCSVFLGSVISWGFLWPFI), 315 to 335 (IAISVILGDGLYNLVKVFLII), 383 to 403 (LAVSGYIVLAAISTVAVPIIF), 410 to 430 (LVLVCYFLAPAIAFCNSYGMG), 443 to 463 (IALFVFASLVGSDGGVIAGLA), 501 to 521 (IGVALGCIIAPLTLWLFWTAF), 557 to 577 (LEICCVFFLAALIINLMKDVV), 595 to 615 (FYIGAYFGVDMFIGTLILFAW), and 633 to 653 (GLICGDGVWSIPSAVLSILGV).

Belongs to the YSL (TC 2.A.67.2) family. As to expression, expressed in roots.

It localises to the membrane. In terms of biological role, may be involved in the transport of nicotianamine-chelated metals. The polypeptide is Probable metal-nicotianamine transporter YSL5 (YSL5) (Oryza sativa subsp. japonica (Rice)).